Consider the following 35-residue polypeptide: Photosystem II reaction center protein T (35 aa).

A helical membrane pass occupies residues 3 to 23; it reads ALVYTFLLVGTLGIIFFAIFF.

This sequence belongs to the PsbT family. PSII is composed of 1 copy each of membrane proteins PsbA, PsbB, PsbC, PsbD, PsbE, PsbF, PsbH, PsbI, PsbJ, PsbK, PsbL, PsbM, PsbT, PsbY, PsbZ, Psb30/Ycf12, at least 3 peripheral proteins of the oxygen-evolving complex and a large number of cofactors. It forms dimeric complexes.

It localises to the plastid. The protein resides in the chloroplast thylakoid membrane. Functionally, found at the monomer-monomer interface of the photosystem II (PS II) dimer, plays a role in assembly and dimerization of PSII. PSII is a light-driven water plastoquinone oxidoreductase, using light energy to abstract electrons from H(2)O, generating a proton gradient subsequently used for ATP formation. This is Photosystem II reaction center protein T from Zygnema circumcarinatum (Green alga).